Here is a 265-residue protein sequence, read N- to C-terminus: Mlc titration factor A (265 aa).

Positions 111, 148, 152, and 211 each coordinate Zn(2+).

It belongs to the MtfA family. Interacts with Mlc. Requires Zn(2+) as cofactor.

The protein resides in the cytoplasm. In terms of biological role, involved in the modulation of the activity of the glucose-phosphotransferase system (glucose-PTS). Interacts with the transcriptional repressor Mlc, preventing its interaction with DNA and leading to the modulation of expression of genes regulated by Mlc, including ptsG, which encodes the PTS system glucose-specific EIICB component. Functionally, shows zinc-dependent metallopeptidase activity. This chain is Mlc titration factor A, found in Klebsiella pneumoniae (strain 342).